The sequence spans 351 residues: tRNA (guanine(10)-N2)-dimethyltransferase (351 aa).

A THUMP domain is found at 57–165; that stretch reads EGHRIIFRYN…ENTFFISNVL (109 aa).

The protein belongs to the methyltransferase superfamily. Trm-G10 family. In terms of assembly, monomer.

It is found in the cytoplasm. The catalysed reaction is guanosine(10) in tRNA + 2 S-adenosyl-L-methionine = N(2)-dimethylguanosine(10) in tRNA + 2 S-adenosyl-L-homocysteine + 2 H(+). Its function is as follows. Catalyzes the adenosylmethionine-dependent methylation of the exocyclic amino group (N(2)) of guanosine at position 10 of various tRNAs. Acts via a two-step process that leads to the formation of either N(2)-monomethyl (m(2)G) or N(2)-dimethylguanosine (m(2)(2)G). The protein is tRNA (guanine(10)-N2)-dimethyltransferase (trmG10) of Methanocaldococcus jannaschii (strain ATCC 43067 / DSM 2661 / JAL-1 / JCM 10045 / NBRC 100440) (Methanococcus jannaschii).